Consider the following 167-residue polypeptide: Small ribosomal subunit protein uS5 (167 aa).

Positions 12–75 (LNEKLIAVNR…EKARRNIRDV (64 aa)) constitute an S5 DRBM domain.

Belongs to the universal ribosomal protein uS5 family. Part of the 30S ribosomal subunit. Contacts proteins S4 and S8.

In terms of biological role, with S4 and S12 plays an important role in translational accuracy. Its function is as follows. Located at the back of the 30S subunit body where it stabilizes the conformation of the head with respect to the body. The sequence is that of Small ribosomal subunit protein uS5 from Psychromonas ingrahamii (strain DSM 17664 / CCUG 51855 / 37).